Consider the following 269-residue polypeptide: tRNA uridine(34) hydroxylase (269 aa).

Residues 121–214 (SQPDVLVIDT…YLERTHNKNG (94 aa)) form the Rhodanese domain. Catalysis depends on cysteine 174, which acts as the Cysteine persulfide intermediate.

The protein belongs to the TrhO family.

It catalyses the reaction uridine(34) in tRNA + AH2 + O2 = 5-hydroxyuridine(34) in tRNA + A + H2O. Catalyzes oxygen-dependent 5-hydroxyuridine (ho5U) modification at position 34 in tRNAs. In Wolbachia sp. subsp. Brugia malayi (strain TRS), this protein is tRNA uridine(34) hydroxylase.